Consider the following 417-residue polypeptide: Ribonuclease T2-like (417 aa).

Residues 1-22 (MSSISGFLGAIPGAQQILQTMA) form the signal peptide. Intrachain disulfides connect cysteine 45–cysteine 63, cysteine 52–cysteine 99, cysteine 62–cysteine 165, cysteine 107–cysteine 157, and cysteine 229–cysteine 264. Histidine 92 is a catalytic residue. N-linked (GlcNAc...) asparagine glycosylation occurs at asparagine 115. Active-site residues include glutamate 150 and histidine 154. Residues 274–296 (KTPNKDPGHGHEPTKTRHPHGPT) form a disordered region. Residues 276 to 288 (PNKDPGHGHEPTK) are compositionally biased toward basic and acidic residues. N-linked (GlcNAc...) asparagine glycosylation occurs at asparagine 383.

This sequence belongs to the RNase T2 family.

It is found in the vacuole lumen. The protein localises to the cytoplasm. The enzyme catalyses a ribonucleotidyl-ribonucleotide-RNA + H2O = a 3'-end 3'-phospho-ribonucleotide-RNA + a 5'-end dephospho-ribonucleoside-RNA + H(+). In terms of biological role, rnase which modulates cell survival under stress conditions. Released from the vacuole to the cytoplasm during stress to promote tRNA and rRNA cleavage and to activate separately a downstream pathway that promotes cell death. Involved in cell size, vacuolar morphology and growth at high temperatures and high salt concentration. The protein is Ribonuclease T2-like (rny1) of Emericella nidulans (strain FGSC A4 / ATCC 38163 / CBS 112.46 / NRRL 194 / M139) (Aspergillus nidulans).